The following is a 686-amino-acid chain: tRNA (guanine(37)-N(1))-methyltransferase (686 aa).

The tract at residues 206 to 244 is disordered; that stretch reads GGPSSVSLTEDTDGSEQPQGLPRAAAAPPPPSNKRRASY. S-adenosyl-L-methionine-binding positions include H428, 466–467, 495–496, and N530; these read DL and DG.

The protein belongs to the class I-like SAM-binding methyltransferase superfamily. TRM5/TYW2 family. Monomer.

It localises to the mitochondrion matrix. It is found in the nucleus. Its subcellular location is the cytoplasm. The catalysed reaction is guanosine(37) in tRNA + S-adenosyl-L-methionine = N(1)-methylguanosine(37) in tRNA + S-adenosyl-L-homocysteine + H(+). Its function is as follows. Specifically methylates the N1 position of guanosine-37 in various cytoplasmic and mitochondrial tRNAs. Methylation is not dependent on the nature of the nucleoside 5' of the target nucleoside. This is the first step in the biosynthesis of wybutosine (yW), a modified base adjacent to the anticodon of tRNAs and required for accurate decoding. The polypeptide is tRNA (guanine(37)-N(1))-methyltransferase (Leishmania major).